The primary structure comprises 630 residues: tRNA uridine 5-carboxymethylaminomethyl modification enzyme MnmG (630 aa).

13–18 (GGGHAG) lines the FAD pocket. NAD(+) is bound at residue 273-287 (GPRYCPSIEDKIHRF).

The protein belongs to the MnmG family. As to quaternary structure, homodimer. Heterotetramer of two MnmE and two MnmG subunits. The cofactor is FAD.

The protein resides in the cytoplasm. Functionally, NAD-binding protein involved in the addition of a carboxymethylaminomethyl (cmnm) group at the wobble position (U34) of certain tRNAs, forming tRNA-cmnm(5)s(2)U34. The protein is tRNA uridine 5-carboxymethylaminomethyl modification enzyme MnmG of Pseudomonas putida (strain W619).